A 1197-amino-acid chain; its full sequence is MEEKPKSTTPPPSVSSLRQKFEQFLDKTDKGFNATRNNYRGPVSSSTGIINDKEKKSHSYFKVREEGSNKRPSSFSASNPITPSSPQSTHSSPIYRGVGYHQYSSVNSGNSYSGSGNNINNIINNSNNSNSNNLYGNNSNNQSSGSLGNFLIDKLEYSAATVTASDLKRERQQLFRNKEEFTMESSSYGGSTIGDDDLDSLNGSSSQQFNHRNSSWADRRERFIKKVMNGQFNEVQMRDELNRLRDIEADKIRAEERRTPSMNMDEFKAIEIERLRKKIYQEELVIFRQEEIEKIQREERIKIEKEYDDKSIISSQERQHIVQQIINQKEDEKGSSPPFPIPLVVNNNNNENNENDNNNNNNNNNNNNNNNNNNNNNNNKNIDLTSFNNNININSNNNEIKNNVIVDSDDEEELERLEQLRRQREIERLREEEEENEDRVERELASRRRQEEDRIKREEEEEEEEQRNYLRRLKELERIKQIEEEEEEERERQSQLQSSQQQQKSSSTQRSSNTVTSTSSSSTGGDSNPSTSQKPTNLLNLMGSNNNISNINTNILSHSIVNSSGGLPPPPPTASHVDNRSRSHTLAGESHSSENTPLVSSIDNNGVNNKMSRSHSGGALSGLALPTAPPLPNQPNVNNSNNNNNNNNINNNHNHSHNHSNNLHQSALKNSSSMSTPSISPSQAGNSATSTVPSSPISASTSMSSPTLVVSPRKDELTTSTGSTRKGSISEREDKKKVSSSSTSSSSSSNGGLSSSGKDHKKDHSSEEKEKEKKSFFNKLFSKEKKDHHSSSKSPSSGSSGGGEVDEKKKKKLSPRVGTPFNVKHDVHVNFNADTGFEGLPKEWEVLIKSNFQEPEVMQHPEEVLDVVKFHAQYQGLASAPAMHAPSIPLTDEPPVTLNDLISLDDPKKIYYNINKIGEGGAGEVFEAINSRTNQTIAIKKMKLKAQNLKTVINEIGMMKNSNHENIVQYIDSYIVADELWVAMEFMSGGCLTEVLDQYRDIQLNESQIAFVCQEVLRGLEYIHKFNRIHRDIKSDNILIGANGEIKLADFGYAAQLTQIRQERNSVVGTPYWMAPELIRGNNYDFKVDVWSLGIMTREMAEGEPPYLEFPPLRALFLLTTQGLPPIRDAHKWSKEFNDFLALCLEKDTEKRASSSSLLHHPFLKRACSGPEFYKAVDAARIEKENQLQNFANLTAI.

5 disordered regions span residues 1-96 (MEEK…PIYR), 328-383 (QKED…KNID), 430-468 (REEEEENEDRVERELASRRRQEEDRIKREEEEEEEEQRN), 485-543 (EEEE…NLMG), and 562-819 (NSSG…RVGT). The segment covering 19–30 (QKFEQFLDKTDK) has biased composition (basic and acidic residues). A compositionally biased stretch (polar residues) spans 34-49 (ATRNNYRGPVSSSTGI). Residues 51 to 69 (NDKEKKSHSYFKVREEGSN) are compositionally biased toward basic and acidic residues. The span at 70–79 (KRPSSFSASN) shows a compositional bias: polar residues. Composition is skewed to low complexity over residues 80 to 94 (PITPSSPQSTHSSPI) and 346 to 381 (NNNNNENNENDNNNNNNNNNNNNNNNNNNNNNNNKN). Positions 439-458 (RVERELASRRRQEEDRIKRE) are enriched in basic and acidic residues. Low complexity predominate over residues 494-523 (SQLQSSQQQQKSSSTQRSSNTVTSTSSSST). Polar residues predominate over residues 524 to 536 (GGDSNPSTSQKPT). Thr585 carries the phosphothreonine; by PKB modification. The segment covering 593–615 (SENTPLVSSIDNNGVNNKMSRSH) has biased composition (polar residues). Composition is skewed to low complexity over residues 636–653 (NVNNSNNNNNNNNINNNH) and 671–707 (SSSMSTPSISPSQAGNSATSTVPSSPISASTSMSSPT). Residues 718 to 727 (TTSTGSTRKG) show a composition bias toward polar residues. Over residues 728-737 (SISEREDKKK) the composition is skewed to basic and acidic residues. Positions 739–756 (SSSSTSSSSSSNGGLSSS) are enriched in low complexity. Over residues 757–790 (GKDHKKDHSSEEKEKEKKSFFNKLFSKEKKDHHS) the composition is skewed to basic and acidic residues. In terms of domain architecture, CRIB spans 817–830 (VGTPFNVKHDVHVN). In terms of domain architecture, Protein kinase spans 911–1164 (YYNINKIGEG…SSSLLHHPFL (254 aa)). ATP contacts are provided by residues 917 to 925 (IGEGGAGEV) and Lys940. The active-site Proton acceptor is the Asp1032.

This sequence belongs to the protein kinase superfamily. STE Ser/Thr protein kinase family. STE20 subfamily. Mg(2+) is required as a cofactor. In terms of processing, phosphorylation on Thr-585 results in cAMP-mediated activation and localization to the cytoskeleton. Colocalizes with myosin II to the cleavage furrow of cells undergoing cytokinesis and the posterior cortex of polarized cells.

Its subcellular location is the cytoplasm. It localises to the cytosol. It is found in the cytoskeleton. It catalyses the reaction L-seryl-[protein] + ATP = O-phospho-L-seryl-[protein] + ADP + H(+). The catalysed reaction is L-threonyl-[protein] + ATP = O-phospho-L-threonyl-[protein] + ADP + H(+). Functionally, regulator of the myosin II component of the cytoskeleton: required for regulation of cytokinesis. Functions during chemotaxis, required for maintaining the direction of cell movement, suppressing lateral pseudopod extension, and proper retraction of the posterior of chemotaxing cells. This chain is Serine/threonine-protein kinase pakA (pakA), found in Dictyostelium discoideum (Social amoeba).